Consider the following 461-residue polypeptide: Porin AaxA (461 aa).

Positions 1–22 (MSFRSVLLTALLSLSFTTTMQA) are cleaved as a signal peptide.

Belongs to the OprB family.

It is found in the cell outer membrane. Its function is as follows. Facilitates L-arginine uptake, as part of the AaxABC system. The arginine uptake by the bacterium in the macrophage may be a virulence factor against the host innate immune response. The sequence is that of Porin AaxA (aaxA) from Chlamydia trachomatis serovar L2 (strain ATCC VR-902B / DSM 19102 / 434/Bu).